A 1095-amino-acid chain; its full sequence is Putative patatin-like phospholipase domain-containing protein M110.7 (1095 aa).

A helical membrane pass occupies residues 9-29 (LLLIFENILELCMCITLVILI). The disordered stretch occupies residues 75 to 113 (HKKRSSKEEMTPDKKRDSSEKISKQPPRELFEPNEQEQV). The span at 80–105 (SKEEMTPDKKRDSSEKISKQPPRELF) shows a compositional bias: basic and acidic residues. A nucleoside 3',5'-cyclic phosphate contacts are provided by residues 144–237 (VETL…LTSF), 327–416 (RKYE…IQFL), and 450–509 (IETG…TVMA). The PNPLA domain occupies 768-935 (IVFGGGGARG…VNNLPADIMR (168 aa)). The GXGXXG signature appears at 772-777 (GGGARG). Residues 799 to 803 (GTSIG) carry the GXSXG motif. Catalysis depends on Ser801, which acts as the Nucleophile. Catalysis depends on Asp922, which acts as the Proton acceptor. The DGA/G motif lies at 922-924 (DGA).

This sequence belongs to the NTE family.

The protein resides in the membrane. This chain is Putative patatin-like phospholipase domain-containing protein M110.7, found in Caenorhabditis elegans.